A 747-amino-acid chain; its full sequence is MDFLEEPFPDVGTYEDFHTIDWLREKSRDTDRHRKITSKSKESIWEFIKSLLDAWSGWVVMLLIGLLAGTLAGVIDLAVDWMTDLKEGVCLSAFWYSHEQCCWTSNETTFEDRDKCPLWQKWSELLLSQSEGASAYILNYLMYILWALLFAFLAVSLVRVFAPYACGSGIPEIKTILSGFIIRGYLGKWTLLIKTVTLVLVVSSGLSLGKEGPLVHVACCCGNFFSSLFSKYSKNEGKRREVLSAAAAAGVSVAFGAPIGGVLFSLEEVSYYFPLKTLWRSFFAALVAAFTLRSINPFGNSRLVLFYVEYHTPWYMAELFPFILLGVFGGLWGTLFTRCNIAWCRRRKTTRLGRYPVLEVIAVTAVTAIVAYPNPYTRQSTSELISELFNDCGALESSQLCDYINDPNMTRPVDDIPDRPAGVGVYTAMWQLALALIFKIVITIFTFGMKIPSGLFIPSMAVGAMAGRMVGIGVEQLAYHHHDWIIFRNWCRPGADCVTPGLYAMVGAAACLGGVTRMTVSLVVIMFELTGGLEYIVPLMAAAVTSKWVADAFGKEGIYEAHIHLNGYPFLDVKDEFTHRTLATDVMRPRRGEPPLSVLTQDSMTVEDVETLIKETDYNGFPVLVSRDSERLIGFAQRRELILAIKNARQRQEGIVSNSIMYFTEEPPELPANSPHPLKLRRILNLSPFTVTDHTPMETVVDIFRKLGLRQCLVTRSGRLLGIITKKDVLRHMAQMANQDPESIMFN.

Residues 1–50 (MDFLEEPFPDVGTYEDFHTIDWLREKSRDTDRHRKITSKSKESIWEFIKS) form a required for localization in the endoplasmic reticulum region. Residues 1–54 (MDFLEEPFPDVGTYEDFHTIDWLREKSRDTDRHRKITSKSKESIWEFIKSLLDA) lie on the Cytoplasmic side of the membrane. Helical transmembrane passes span 55–92 (WSGW…VCLS) and 138–161 (LNYL…VRVF). Positions 167-171 (GSGIP) match the Selectivity filter part_1 motif. Chloride is bound at residue Ser168. The segment at residues 170-177 (IPEIKTIL) is an intramembrane region (helical). Helical transmembrane passes span 187–205 (GKWT…VSSG) and 211–230 (EGPL…SLFS). The Selectivity filter part_2 signature appears at 209 to 213 (GKEGP). Intramembrane regions (helical) lie at residues 242–254 (VLSA…VSVA) and 258–266 (PIGGVLFSL). 5 helical membrane-spanning segments follow: residues 278 to 296 (LWRS…RSIN), 320 to 345 (FPFI…AWCR), 352 to 372 (LGRY…IVAY), 429 to 449 (MWQL…TFGM), and 454 to 473 (GLFI…VGIG). Positions 454–458 (GLFIP) match the Selectivity filter part_3 motif. Phe456 serves as a coordination point for chloride. Intramembrane regions (helical) lie at residues 501-515 (GLYA…LGGV) and 519-530 (TVSLVVIMFELT). The note=Loop between two helices intramembrane region spans 531–534 (GGLE). Residues 535–553 (YIVPLMAAAVTSKWVADAF) form a helical membrane-spanning segment. The Cytoplasmic portion of the chain corresponds to 554–747 (GKEGIYEAHI…NQDPESIMFN (194 aa)). Position 559 (Tyr559) interacts with chloride. CBS domains follow at residues 587–653 (MRPR…QRQE) and 680–742 (LRRI…QDPE). ATP-binding positions include Ser597 and 618 to 620 (YNG). A required for localization in the endoplasmic reticulum region spans residues 654–683 (GIVSNSIMYFTEEPPELPANSPHPLKLRRI). 725–728 (TKKD) contacts ATP.

This sequence belongs to the chloride channel (TC 2.A.49) family. ClC-4/CLCN4 subfamily. In terms of tissue distribution, predominantly present in excitable tissues such as nervous system and skeletal muscle. Not detected in heart.

It localises to the early endosome membrane. Its subcellular location is the late endosome membrane. The protein localises to the endoplasmic reticulum membrane. The protein resides in the lysosome membrane. It is found in the recycling endosome membrane. Its function is as follows. Strongly outwardly rectifying, electrogenic H(+)/Cl(-)exchanger which mediates the exchange of chloride ions against protons. The CLC channel family contains both chloride channels and proton-coupled anion transporters that exchange chloride or another anion for protons. The presence of conserved gating glutamate residues is typical for family members that function as antiporters. This chain is H(+)/Cl(-) exchange transporter 4 (Clcn4), found in Mus musculus (Mouse).